Consider the following 800-residue polypeptide: Cation/H(+) antiporter 9 (800 aa).

12 helical membrane passes run 43-63 (VIFG…FVCI), 73-93 (IGIP…PQLL), 110-130 (NVAL…LMGV), 145-165 (IVIA…FRNF), 186-206 (VIVS…VYEL), 216-236 (IAIS…VCIS), 247-267 (GIAN…LFIF), 287-306 (VYLY…LSVF), 338-358 (LVTN…ADVV), 371-391 (ILLL…PCLI), 401-421 (VIIA…FDVA), and 430-450 (ATYT…PTII).

The protein belongs to the monovalent cation:proton antiporter 2 (CPA2) transporter (TC 2.A.37) family. CHX (TC 2.A.37.4) subfamily.

The protein resides in the membrane. In terms of biological role, may operate as a cation/H(+) antiporter. The sequence is that of Cation/H(+) antiporter 9 (CHX9) from Arabidopsis thaliana (Mouse-ear cress).